Reading from the N-terminus, the 447-residue chain is Tubulin beta-2 chain (447 aa).

Residues Gln11, Glu69, Ser138, Gly142, Thr143, Gly144, Asn204, and Asn226 each contribute to the GTP site. Glu69 lines the Mg(2+) pocket. The disordered stretch occupies residues 427–447; that stretch reads DASISEGEEEYEEEQQLENEE. Residues 432–447 are compositionally biased toward acidic residues; sequence EGEEEYEEEQQLENEE.

Belongs to the tubulin family. In terms of assembly, dimer of alpha and beta chains. A typical microtubule is a hollow water-filled tube with an outer diameter of 25 nm and an inner diameter of 15 nM. Alpha-beta heterodimers associate head-to-tail to form protofilaments running lengthwise along the microtubule wall with the beta-tubulin subunit facing the microtubule plus end conferring a structural polarity. Microtubules usually have 13 protofilaments but different protofilament numbers can be found in some organisms and specialized cells. Mg(2+) is required as a cofactor.

Its subcellular location is the cytoplasm. It is found in the cytoskeleton. Its function is as follows. Tubulin is the major constituent of microtubules, a cylinder consisting of laterally associated linear protofilaments composed of alpha- and beta-tubulin heterodimers. Microtubules grow by the addition of GTP-tubulin dimers to the microtubule end, where a stabilizing cap forms. Below the cap, tubulin dimers are in GDP-bound state, owing to GTPase activity of alpha-tubulin. The protein is Tubulin beta-2 chain (TUB2) of Erysiphe pisi (Pea powdery mildew).